A 475-amino-acid polypeptide reads, in one-letter code: ATP-dependent protease ATPase subunit HslU1 (475 aa).

The transit peptide at methionine 1–glycine 27 directs the protein to the mitochondrion. Residues isoleucine 66, glycine 108–glutamate 113, aspartate 286, glutamate 353, and arginine 425 contribute to the ATP site.

This sequence belongs to the ClpX chaperone family. HslU subfamily. In terms of assembly, a double ring-shaped homohexamer of HslV is capped on each side by a ring-shaped HslU homohexamer. The assembly of the HslU/HslV complex (HslVU) is dependent on binding of ATP.

Its subcellular location is the mitochondrion matrix. The protein localises to the kinetoplast. ATPase subunit of a proteasome-like degradation complex; this subunit has chaperone activity. The binding of ATP and its subsequent hydrolysis by HslU are essential for unfolding of protein substrates subsequently hydrolyzed by HslV. HslU recognizes the N-terminal part of its protein substrates and unfolds these before they are guided to HslV for hydrolysis. The HslVU protease complex functions in mitochondrial DNA replication by regulating DNA helicase PIF2 protein levels. The protein is ATP-dependent protease ATPase subunit HslU1 (HslU1) of Trypanosoma brucei brucei (strain 927/4 GUTat10.1).